Consider the following 1832-residue polypeptide: MEDTPPSLSCSDCQRHFPSLPELSRHRELLHPSPNQDSEEADSIPRPYRCQQCGRGYRHPGSLVNHRRTHETGLFPCTTCGKDFSNPMALKSHMRTHAPEGRRRHRPPRPKEATPHLQGETVSTDSWGQRLGSSEGWENQTKHTEETPDCESVPDPRAASGTWEDLPTRQREGLASHPGPEDGADGWGPSTNSARAPPLPIPASSLLSNLEQYLAESVVNFTGGQEPTQSPPAEEERRYKCSQCGKTYKHAGSLTNHRQSHTLGIYPCAICFKEFSNLMALKNHSRLHAQYRPYHCPHCPRVFRLPRELLEHQQSHEGERQEPRWEEKGMPTTNGHTDESSQDQLPSAQMLNGSAELSTSGELEDSGLEEYRPFRCGDCGRTYRHAGSLINHRKSHQTGVYPCSLCSKQLFNAAALKNHVRAHHRPRQGVGENGQPSVPPAPLLLAETTHKEEEDPTTTLDHRPYKCSECGRAYRHRGSLVNHRHSHRTGEYQCSLCPRKYPNLMALRNHVRVHCKAARRSADIGAEGAPSHLKVELPPDPVEAEAAPHTDQDHVCKHEEEATDITPAADKTAAHICSICGLLFEDAESLERHGLTHGAGEKENSRTETTMSPPRAFACRDCGKSYRHSGSLINHRQTHQTGDFSCGACAKHFHTMAAMKNHLRRHSRRRSRRHRKRAGGASGGREAKLLAAESWTRELEDNEGLESPQDPSGESPHGAEGNLESDGDCLQAESEGDKCGLERDETHFQGDKESGGTGEGLERKDASLLDNLDIPGEEGGGTHFCDSLTGVDEDQKPATGQPNSSSHSANAVTGWQAGAAHTCSDCGHSFPHATGLLSHRPCHPPGIYQCSLCPKEFDSLPALRSHFQNHRPGEATSAQPFLCCLCGMIFPGRAGYRLHRRQAHSSSGMTEGSEEEGEEEGVAEAAPARSPPLQLSEAELLNQLQREVEALDSAGYGHICGCCGQTYDDLGSLERHHQSQSSGTTADKAPSPLGVAGDAMEMVVDSVLEDIVNSVSGEGGDAKSQEGAGTPLGDSLCIQGGESLLEAQPRPFRCNQCGKTYRHGGSLVNHRKIHQTGDFLCPVCSRCYPNLAAYRNHLRNHPRCKGSEPQVGPIPEAAGSSELQVGPIPEGGSNKPQHMAEEGPGQAEVEKLQEELKVEPLEEVARVKEEVWEETTVKGEEIEPRLETAEKGCQTEASSERPFSCEVCGRSYKHAGSLINHRQSHQTGHFGCQACSKGFSNLMSLKNHRRIHADPRRFRCSECGKAFRLRKQLASHQRVHMERRGGGGTRKATREDRPFRCGQCGRTYRHAGSLLNHRRSHETGQYSCPTCPKTYSNRMALKDHQRLHSENRRRRAGRSRRTAVRCALCGRSFPGRGSLERHLREHEETEREPANGQGGLDGTAASEANLTGSQGLETQLGGAEPVPHLEDGVPRPGERSQSPIRAASSEAPEPLSWGAGKAGGWPVGGGLGNHSGGWVPQFLTRSEEPEDSVHRSPCHAGDCQLNGPTLSHMDSWDNRDNSSQLQPGSHSSCSQCGKTYCQSGSLLNHNTNKTDRHYCLLCSKEFLNPVATKSHSHNHIDAQTFACPDCGKAFESHQELASHLQAHARGHSQVPAQMEEARDPKAGTGEDQVVLPGQGKAQEAPSETPRGPGESVERARGGQAVTSMAAEDKERPFRCTQCGRSYRHAGSLLNHQKAHTTGLYPCSLCPKLLPNLLSLKNHSRTHTDPKRHCCSICGKAFRTAARLEGHGRVHAPREGPFTCPHCPRHFRRRISFVQHQQQHQEEWTVAGSGAPVAPVTGRGDLPLPPPPTPTTPLLDPSPQWPADLSFSL.

8 consecutive C2H2-type zinc fingers follow at residues 8 to 31 (LSCS…ELLH), 48 to 70 (YRCQ…RRTH), 75 to 97 (FPCT…MRTH), 239 to 261 (YKCS…RQSH), 266 to 288 (YPCA…SRLH), 294 to 316 (YHCP…QQSH), 374 to 396 (FRCG…RKSH), and 401 to 424 (YPCS…RAHH). Positions 26 to 47 (HRELLHPSPNQDSEEADSIPRP) are disordered. The segment covering 94–108 (MRTHAPEGRRRHRPP) has biased composition (basic residues). The segment at 94 to 200 (MRTHAPEGRR…TNSARAPPLP (107 aa)) is disordered. The span at 313–329 (QQSHEGERQEPRWEEKG) shows a compositional bias: basic and acidic residues. The tract at residues 313–346 (QQSHEGERQEPRWEEKGMPTTNGHTDESSQDQLP) is disordered. Lys-451 is covalently cross-linked (Glycyl lysine isopeptide (Lys-Gly) (interchain with G-Cter in SUMO2)). 2 consecutive C2H2-type zinc fingers follow at residues 465 to 487 (YKCS…RHSH) and 492 to 514 (YQCS…VRVH). Residues Lys-534 and Lys-557 each participate in a glycyl lysine isopeptide (Lys-Gly) (interchain with G-Cter in SUMO2) cross-link. A C2H2-type 11 zinc finger spans residues 575-597 (HICSICGLLFEDAESLERHGLTH). The residue at position 612 (Ser-612) is a Phosphoserine. 2 consecutive C2H2-type zinc fingers follow at residues 617 to 639 (FACR…RQTH) and 644 to 666 (FSCG…LRRH). The interval 660–810 (KNHLRRHSRR…QPNSSSHSAN (151 aa)) is disordered. Residues 661–678 (NHLRRHSRRRSRRHRKRA) are compositionally biased toward basic residues. A Glycyl lysine isopeptide (Lys-Gly) (interchain with G-Cter in SUMO2) cross-link involves residue Lys-688. The span at 735-767 (EGDKCGLERDETHFQGDKESGGTGEGLERKDAS) shows a compositional bias: basic and acidic residues. Polar residues predominate over residues 798 to 810 (ATGQPNSSSHSAN). 3 C2H2-type zinc fingers span residues 821–843 (HTCS…RPCH), 848–870 (YQCS…FQNH), and 881–904 (FLCC…RQAH). The disordered stretch occupies residues 901–931 (RQAHSSSGMTEGSEEEGEEEGVAEAAPARSP). Residues 912-922 (GSEEEGEEEGV) show a composition bias toward acidic residues. The C2H2-type 17; degenerate zinc finger occupies 958-980 (HICGCCGQTYDDLGSLERHHQSQ). C2H2-type zinc fingers lie at residues 1052 to 1074 (FRCN…RKIH) and 1079 to 1101 (FLCP…LRNH). A disordered region spans residues 1103 to 1148 (RCKGSEPQVGPIPEAAGSSELQVGPIPEGGSNKPQHMAEEGPGQAE). Glycyl lysine isopeptide (Lys-Gly) (interchain with G-Cter in SUMO2) cross-links involve residues Lys-1157, Lys-1168, and Lys-1178. 6 consecutive C2H2-type zinc fingers follow at residues 1203 to 1225 (FSCE…RQSH), 1230 to 1252 (FGCQ…RRIH), 1258 to 1280 (FRCS…QRVH), 1299 to 1321 (FRCG…RRSH), 1326 to 1348 (YSCP…QRLH), and 1364 to 1386 (VRCA…LREH). Residues 1274–1294 (ASHQRVHMERRGGGGTRKATR) form a disordered region. Disordered regions lie at residues 1377-1481 (GSLE…WVPQ) and 1509-1529 (TLSH…QPGS). Residues 1378–1393 (SLERHLREHEETEREP) are compositionally biased toward basic and acidic residues. Over residues 1406–1417 (SEANLTGSQGLE) the composition is skewed to polar residues. Basic and acidic residues predominate over residues 1427 to 1438 (PHLEDGVPRPGE). Residues 1460 to 1475 (GKAGGWPVGGGLGNHS) show a composition bias toward gly residues. 6 C2H2-type zinc fingers span residues 1557–1579 (HYCL…SHNH), 1585–1607 (FACP…LQAH), 1677–1699 (FRCT…QKAH), 1704–1726 (YPCS…SRTH), 1732–1754 (HCCS…GRVH), and 1761–1783 (FTCP…QQQH). Residues 1606–1672 (AHARGHSQVP…QAVTSMAAED (67 aa)) are disordered. The interval 1781-1832 (QQHQEEWTVAGSGAPVAPVTGRGDLPLPPPPTPTTPLLDPSPQWPADLSFSL) is disordered.

Belongs to the krueppel C2H2-type zinc-finger protein family.

It localises to the nucleus. Functionally, may be involved in transcriptional regulation. This Homo sapiens (Human) protein is Zinc finger protein 646.